We begin with the raw amino-acid sequence, 444 residues long: Methylenetetrahydrofolate--tRNA-(uracil-5-)-methyltransferase TrmFO (444 aa).

10–15 (GAGLAG) serves as a coordination point for FAD.

This sequence belongs to the MnmG family. TrmFO subfamily. Requires FAD as cofactor.

The protein localises to the cytoplasm. It carries out the reaction uridine(54) in tRNA + (6R)-5,10-methylene-5,6,7,8-tetrahydrofolate + NADH + H(+) = 5-methyluridine(54) in tRNA + (6S)-5,6,7,8-tetrahydrofolate + NAD(+). It catalyses the reaction uridine(54) in tRNA + (6R)-5,10-methylene-5,6,7,8-tetrahydrofolate + NADPH + H(+) = 5-methyluridine(54) in tRNA + (6S)-5,6,7,8-tetrahydrofolate + NADP(+). Functionally, catalyzes the folate-dependent formation of 5-methyl-uridine at position 54 (M-5-U54) in all tRNAs. The polypeptide is Methylenetetrahydrofolate--tRNA-(uracil-5-)-methyltransferase TrmFO (Streptococcus equi subsp. zooepidemicus (strain H70)).